The primary structure comprises 297 residues: ATP synthase F(1) complex subunit gamma, mitochondrial (297 aa).

Residues 1 to 25 constitute a mitochondrion transit peptide; sequence MFSRAGVAGLSAWTLQPQWIQVRNM. Lys39 carries the post-translational modification N6-acetyllysine. Position 49 is an N6-succinyllysine (Lys49). Residue Lys55 is modified to N6-acetyllysine. An N6-acetyllysine; alternate modification is found at Lys115. Residue Lys115 is modified to N6-succinyllysine; alternate. Phosphoserine is present on Ser146. Lys154 is modified (N6-acetyllysine; alternate). Lys154 is subject to N6-succinyllysine; alternate. At Lys197 the chain carries N6-acetyllysine. The residue at position 270 (Lys270) is an N6-succinyllysine.

Belongs to the ATPase gamma chain family. Component of the ATP synthase complex composed at least of ATP5F1A/subunit alpha, ATP5F1B/subunit beta, ATP5MC1/subunit c (homooctomer), MT-ATP6/subunit a, MT-ATP8/subunit 8, ATP5ME/subunit e, ATP5MF/subunit f, ATP5MG/subunit g, ATP5MK/subunit k, ATP5MJ/subunit j, ATP5F1C/subunit gamma, ATP5F1D/subunit delta, ATP5F1E/subunit epsilon, ATP5PF/subunit F6, ATP5PB/subunit b, ATP5PD/subunit d, ATP5PO/subunit OSCP. ATP synthase complex consists of a soluble F(1) head domain (subunits alpha(3) and beta(3)) - the catalytic core - and a membrane F(0) domain - the membrane proton channel (subunits c, a, 8, e, f, g, k and j). These two domains are linked by a central stalk (subunits gamma, delta, and epsilon) rotating inside the F1 region and a stationary peripheral stalk (subunits F6, b, d, and OSCP). Interacts with FLVCR2; this interaction occurs in the absence of heme and is disrupted upon heme binding.

It localises to the mitochondrion inner membrane. Subunit gamma, of the mitochondrial membrane ATP synthase complex (F(1)F(0) ATP synthase or Complex V) that produces ATP from ADP in the presence of a proton gradient across the membrane which is generated by electron transport complexes of the respiratory chain. ATP synthase complex consist of a soluble F(1) head domain - the catalytic core - and a membrane F(1) domain - the membrane proton channel. These two domains are linked by a central stalk rotating inside the F(1) region and a stationary peripheral stalk. During catalysis, ATP synthesis in the catalytic domain of F(1) is coupled via a rotary mechanism of the central stalk subunits to proton translocation. In vivo, can only synthesize ATP although its ATP hydrolase activity can be activated artificially in vitro. With the central stalk subunit delta, is essential for the biogenesis of F(1) catalytic part of the ATP synthase complex namely in the formation of F1 assembly intermediate. The polypeptide is ATP synthase F(1) complex subunit gamma, mitochondrial (Pongo abelii (Sumatran orangutan)).